We begin with the raw amino-acid sequence, 340 residues long: Nitrilase (340 aa).

The region spanning I7 to M273 is the CN hydrolase domain. The Proton acceptor role is filled by E47. The active site involves K129. C163 serves as the catalytic Nucleophile.

This sequence belongs to the carbon-nitrogen hydrolase superfamily. Nitrilase family. In terms of assembly, forms oligomers.

The catalysed reaction is a nitrile + 2 H2O = a carboxylate + NH4(+). It carries out the reaction phenylpropanonitrile + 2 H2O = 3-phenylpropanoate + NH4(+). It catalyses the reaction an aliphatic nitrile + 2 H2O = a carboxylate + NH4(+). Highly resistant to various miscible cosolvents and tolerates high substrate concentrations. Its function is as follows. Catalyzes the hydrolysis of a broad range of nitriles to yield their corresponding carboxylic acid and ammonia. In vitro, shows high activity toward benzylic/unsaturated nitriles. The preferred substrate is trans-cinnamonitrile, followed by mono/di-cyanopyridines and aromatic substituted nitriles, with a moderate activity toward 3-phenylpropionitrile. Shows weaker activity toward the common dinitrile fumaronitrile. Also shows weak activity toward some aliphatic nitriles, including adiponitrile and glutaronitrile, and the arylacetonitrile 2-thiopheneacetonitrile. The polypeptide is Nitrilase (Paraburkholderia phymatum (strain DSM 17167 / CIP 108236 / LMG 21445 / STM815) (Burkholderia phymatum)).